A 353-amino-acid chain; its full sequence is N-acetyl-gamma-glutamyl-phosphate reductase (353 aa).

The active site involves Cys157.

The protein belongs to the NAGSA dehydrogenase family. Type 1 subfamily.

It is found in the cytoplasm. The catalysed reaction is N-acetyl-L-glutamate 5-semialdehyde + phosphate + NADP(+) = N-acetyl-L-glutamyl 5-phosphate + NADPH + H(+). Its pathway is amino-acid biosynthesis; L-arginine biosynthesis; N(2)-acetyl-L-ornithine from L-glutamate: step 3/4. Its function is as follows. Catalyzes the NADPH-dependent reduction of N-acetyl-5-glutamyl phosphate to yield N-acetyl-L-glutamate 5-semialdehyde. This is N-acetyl-gamma-glutamyl-phosphate reductase from Bordetella avium (strain 197N).